We begin with the raw amino-acid sequence, 61 residues long: uncharacterized protein (61 aa).

Positions 39 to 61 are disordered; it reads PRPFTPGLADPRRLGPRRVQAAQ.

This is an uncharacterized protein from Pan troglodytes (Chimpanzee).